The chain runs to 585 residues: Lipoprotein LpqB (585 aa).

The first 17 residues, 1 to 17, serve as a signal peptide directing secretion; it reads MGRKLLGLLMLAVLLAG. Residue cysteine 18 is the site of N-palmitoyl cysteine attachment. Cysteine 18 carries the S-diacylglycerol cysteine lipid modification. 2 disordered regions span residues 24 to 46 and 560 to 585; these read SSAP…KPTP and PSAD…VLPG.

This sequence belongs to the LpqB lipoprotein family.

Its subcellular location is the cell membrane. The chain is Lipoprotein LpqB from Mycobacterium paratuberculosis.